The primary structure comprises 422 residues: MLLIKNGRVVDPKSGLDTQADVLVDGKKVVKIAENIDAGDAQVIDATGLVVAPGLVDIHVHFREPGQTHKEDIHTGALAAAAGGFTTVVMMANTNPTISDKETLKEVLTSAAKENIHIKSVATITKNFDGENITDFKGLLEAGAVGFSDDGIPLTNAGIVKKAMELAKENNTFISLHEEDPDLNGVLGFNENIAKKEFHICGATGVAEYSMIARDVMVAYDTQAHVHIQHLSKAESVKVVEFAQKLGAQVTAEVAPQHFSKTEDLLLSKGANAKMNPPLRLESDRQAVIEGLKSGVISVIATDHAPHHADEKNVADVTKAPSGMTGLETSLSLGLTYLVEAGHLSLTELLKLMTSNPSDLYGFDAGYLAENGPADLVIFADKEKRQVTADFKSKAANSPFVGEELTGSVKYTICDGEIVYQV.

Residues His59 and His61 each contribute to the Zn(2+) site. Substrate contacts are provided by residues 61-63 (HFR) and Asn93. Asp150, His177, and His230 together coordinate Zn(2+). A substrate-binding site is contributed by Asn276. Asp303 is a binding site for Zn(2+). Asp303 is an active-site residue. Residue His307 participates in substrate binding.

The protein belongs to the metallo-dependent hydrolases superfamily. DHOase family. Class I DHOase subfamily. Requires Zn(2+) as cofactor.

It carries out the reaction (S)-dihydroorotate + H2O = N-carbamoyl-L-aspartate + H(+). It functions in the pathway pyrimidine metabolism; UMP biosynthesis via de novo pathway; (S)-dihydroorotate from bicarbonate: step 3/3. Catalyzes the reversible cyclization of carbamoyl aspartate to dihydroorotate. In Streptococcus thermophilus (strain CNRZ 1066), this protein is Dihydroorotase.